Consider the following 165-residue polypeptide: Disulfide bond formation protein B (165 aa).

The Cytoplasmic segment spans residues 1-10; that stretch reads MPAWLTNRTI. The chain crosses the membrane as a helical span at residues 11 to 27; the sequence is YFLCFLAIAGLMGFAFY. Residues 28-45 are Periplasmic-facing; that stretch reads LQYVKDLEPCPLCMAQRI. A disulfide bond links cysteine 37 and cysteine 40. The chain crosses the membrane as a helical span at residues 46 to 62; it reads AFVLAGLVFLAAALHNP. Over 63–68 the chain is Cytoplasmic; it reads KNTGTT. Residues 69 to 86 traverse the membrane as a helical segment; it reads VYAFLGWVTTLGGAALAT. At 87–143 the chain is on the periplasmic side; the sequence is RQLWLQSLPADQVPACGPGLEYMLEAFPFSEVLTMMLTGTGECAEVQWTFLGLSIPG. Cysteine 102 and cysteine 129 form a disulfide bridge. A helical membrane pass occupies residues 144–162; it reads WTLVAFIGFTAVWAFAWVR. At 163–165 the chain is on the cytoplasmic side; sequence RPR.

The protein belongs to the DsbB family.

The protein localises to the cell inner membrane. Functionally, required for disulfide bond formation in some periplasmic proteins. Acts by oxidizing the DsbA protein. The polypeptide is Disulfide bond formation protein B (Hahella chejuensis (strain KCTC 2396)).